Consider the following 655-residue polypeptide: Probable alpha-galactosidase D (655 aa).

An N-terminal signal peptide occupies residues 1-16; the sequence is MLPKIFYLSLLPAALG. N-linked (GlcNAc...) asparagine glycans are attached at residues Asn-47 and Asn-91. Cys-124 and Cys-155 are oxidised to a cystine. Asp-153 (nucleophile) is an active-site residue. 2 N-linked (GlcNAc...) asparagine glycosylation sites follow: Asn-180 and Asn-189. 198–202 provides a ligand contact to substrate; the sequence is EWGID. Asp-220 functions as the Proton donor in the catalytic mechanism. N-linked (GlcNAc...) asparagine glycosylation is found at Asn-349, Asn-436, Asn-458, Asn-503, Asn-537, Asn-541, and Asn-580.

It belongs to the glycosyl hydrolase 27 family.

The protein localises to the secreted. It catalyses the reaction Hydrolysis of terminal, non-reducing alpha-D-galactose residues in alpha-D-galactosides, including galactose oligosaccharides, galactomannans and galactolipids.. Functionally, hydrolyzes a variety of simple alpha-D-galactoside as well as more complex molecules such as oligosaccharides and polysaccharides. This is Probable alpha-galactosidase D (aglD) from Aspergillus flavus (strain ATCC 200026 / FGSC A1120 / IAM 13836 / NRRL 3357 / JCM 12722 / SRRC 167).